A 708-amino-acid chain; its full sequence is Polyribonucleotide nucleotidyltransferase (708 aa).

Asp-487 and Asp-493 together coordinate Mg(2+). The 60-residue stretch at Pro-554–Ile-613 folds into the KH domain. Residues Gly-623 to Lys-691 enclose the S1 motif domain.

This sequence belongs to the polyribonucleotide nucleotidyltransferase family. In terms of assembly, component of the RNA degradosome, which is a multiprotein complex involved in RNA processing and mRNA degradation. It depends on Mg(2+) as a cofactor.

The protein localises to the cytoplasm. It catalyses the reaction RNA(n+1) + phosphate = RNA(n) + a ribonucleoside 5'-diphosphate. Its function is as follows. Involved in mRNA degradation. Catalyzes the phosphorolysis of single-stranded polyribonucleotides processively in the 3'- to 5'-direction. This chain is Polyribonucleotide nucleotidyltransferase, found in Vibrio vulnificus (strain CMCP6).